Consider the following 311-residue polypeptide: 33 kDa chaperonin (311 aa).

Disulfide bonds link Cys240-Cys242 and Cys273-Cys276.

It belongs to the HSP33 family. In terms of processing, under oxidizing conditions two disulfide bonds are formed involving the reactive cysteines. Under reducing conditions zinc is bound to the reactive cysteines and the protein is inactive.

It is found in the cytoplasm. In terms of biological role, redox regulated molecular chaperone. Protects both thermally unfolding and oxidatively damaged proteins from irreversible aggregation. Plays an important role in the bacterial defense system toward oxidative stress. This chain is 33 kDa chaperonin, found in Trichodesmium erythraeum (strain IMS101).